Reading from the N-terminus, the 61-residue chain is Large ribosomal subunit protein bL32 (61 aa).

Residues 1–44 are disordered; that stretch reads MAVQQNRKSRSRRDMRRSHDALTENALTVDQATGETHRRHHVTK. Residues 7 to 16 show a composition bias toward basic residues; sequence RKSRSRRDMR. Residues 25 to 34 are compositionally biased toward polar residues; it reads NALTVDQATG.

It belongs to the bacterial ribosomal protein bL32 family.

The chain is Large ribosomal subunit protein bL32 from Acinetobacter baumannii (strain AB307-0294).